We begin with the raw amino-acid sequence, 645 residues long: UvrABC system protein C (645 aa).

The region spanning 12 to 91 (TGPGVYLYKN…IKQRKPRFNV (80 aa)) is the GIY-YIG domain. Positions 202-237 (ADLERSLEVRMQEAAAAEQFELAAKYRDLLVTLHQL) constitute a UVR domain.

It belongs to the UvrC family. As to quaternary structure, interacts with UvrB in an incision complex.

The protein resides in the cytoplasm. Its function is as follows. The UvrABC repair system catalyzes the recognition and processing of DNA lesions. UvrC both incises the 5' and 3' sides of the lesion. The N-terminal half is responsible for the 3' incision and the C-terminal half is responsible for the 5' incision. The sequence is that of UvrABC system protein C from Acidobacterium capsulatum (strain ATCC 51196 / DSM 11244 / BCRC 80197 / JCM 7670 / NBRC 15755 / NCIMB 13165 / 161).